A 382-amino-acid polypeptide reads, in one-letter code: Succinyl-diaminopimelate desuccinylase (382 aa).

Position 73 (His-73) interacts with Zn(2+). Residue Asp-75 is part of the active site. Asp-106 serves as a coordination point for Zn(2+). The active-site Proton acceptor is Glu-140. Positions 141, 169, and 355 each coordinate Zn(2+).

Belongs to the peptidase M20A family. DapE subfamily. In terms of assembly, homodimer. Zn(2+) serves as cofactor. Requires Co(2+) as cofactor.

The catalysed reaction is N-succinyl-(2S,6S)-2,6-diaminopimelate + H2O = (2S,6S)-2,6-diaminopimelate + succinate. It functions in the pathway amino-acid biosynthesis; L-lysine biosynthesis via DAP pathway; LL-2,6-diaminopimelate from (S)-tetrahydrodipicolinate (succinylase route): step 3/3. Its function is as follows. Catalyzes the hydrolysis of N-succinyl-L,L-diaminopimelic acid (SDAP), forming succinate and LL-2,6-diaminopimelate (DAP), an intermediate involved in the bacterial biosynthesis of lysine and meso-diaminopimelic acid, an essential component of bacterial cell walls. The chain is Succinyl-diaminopimelate desuccinylase from Saccharophagus degradans (strain 2-40 / ATCC 43961 / DSM 17024).